Here is a 209-residue protein sequence, read N- to C-terminus: Imidazole glycerol phosphate synthase subunit HisH (209 aa).

The Glutamine amidotransferase type-1 domain occupies 3 to 209; it reads KIAIIDYGMG…SILKNFGEMK (207 aa). The Nucleophile role is filled by C81. Residues H190 and E192 contribute to the active site.

In terms of assembly, heterodimer of HisH and HisF.

The protein resides in the cytoplasm. It catalyses the reaction 5-[(5-phospho-1-deoxy-D-ribulos-1-ylimino)methylamino]-1-(5-phospho-beta-D-ribosyl)imidazole-4-carboxamide + L-glutamine = D-erythro-1-(imidazol-4-yl)glycerol 3-phosphate + 5-amino-1-(5-phospho-beta-D-ribosyl)imidazole-4-carboxamide + L-glutamate + H(+). The catalysed reaction is L-glutamine + H2O = L-glutamate + NH4(+). The protein operates within amino-acid biosynthesis; L-histidine biosynthesis; L-histidine from 5-phospho-alpha-D-ribose 1-diphosphate: step 5/9. Its function is as follows. IGPS catalyzes the conversion of PRFAR and glutamine to IGP, AICAR and glutamate. The HisH subunit catalyzes the hydrolysis of glutamine to glutamate and ammonia as part of the synthesis of IGP and AICAR. The resulting ammonia molecule is channeled to the active site of HisF. The chain is Imidazole glycerol phosphate synthase subunit HisH from Geobacter sulfurreducens (strain ATCC 51573 / DSM 12127 / PCA).